Reading from the N-terminus, the 287-residue chain is 4-hydroxybenzoate octaprenyltransferase (287 aa).

Helical transmembrane passes span 21-41 (VGIFLLLWPTLWAVWIAAKGA), 44-64 (FKIAVIFIAGSVVMRAAGCIV), 91-111 (VTEAMLLFAVLSLIAFTLVLL), 112-132 (LNRLTVELAVIGILLALVYPF), 139-159 (LPQLWLGVAFSWSIPMAFAAT), 160-180 (VGHVPAVAWLLFFAAVLWPIV), 211-231 (LMIGLLQGSVLLTFGLLGWYL), 235-255 (YWFYLGLLVALGLMCYQQFLI), and 263-283 (CFAAFRNNNWVGFFIFLGILL).

Belongs to the UbiA prenyltransferase family. The cofactor is Mg(2+).

The protein resides in the cell inner membrane. The enzyme catalyses all-trans-octaprenyl diphosphate + 4-hydroxybenzoate = 4-hydroxy-3-(all-trans-octaprenyl)benzoate + diphosphate. Its pathway is cofactor biosynthesis; ubiquinone biosynthesis. Its function is as follows. Catalyzes the prenylation of para-hydroxybenzoate (PHB) with an all-trans polyprenyl group. Mediates the second step in the final reaction sequence of ubiquinone-8 (UQ-8) biosynthesis, which is the condensation of the polyisoprenoid side chain with PHB, generating the first membrane-bound Q intermediate 3-octaprenyl-4-hydroxybenzoate. In Coxiella burnetii (strain CbuG_Q212) (Coxiella burnetii (strain Q212)), this protein is 4-hydroxybenzoate octaprenyltransferase.